Consider the following 115-residue polypeptide: Large ribosomal subunit protein bL20 (115 aa).

The protein belongs to the bacterial ribosomal protein bL20 family.

Binds directly to 23S ribosomal RNA and is necessary for the in vitro assembly process of the 50S ribosomal subunit. It is not involved in the protein synthesizing functions of that subunit. This is Large ribosomal subunit protein bL20 from Chlorobaculum parvum (strain DSM 263 / NCIMB 8327) (Chlorobium vibrioforme subsp. thiosulfatophilum).